A 441-amino-acid polypeptide reads, in one-letter code: MAALILRTLLDNNVFSSSDYIHTIKDPLSTSMVEVSGNPQSCGVSEAFSSPSLKKADVSLTFGSSQEISYAAMSAPLNADTSRIPDEIAPTDVNKTELDLSTNNFGVPLADVVLPSSSSTTLSPSIVSEQQQQQQQQQQQQQQAISSEEIITSKGGIKSGAGELPFSIVYGSAFSKTPEIVSFQQPTQKQINDFLQMKSDATRVVTSDGYIFREIFNPDHDDGFKQALEMYGSSFFEPTEPGKNHLHTLCNRGLYRMMVMEDDKGLVLACAFIVEVHAYKSYHMDYLAVRPGIRGGGLGGKFFKQLTTHLRNEQKYLIITFESEPKLVPWYLRMSCLHLNVVSDQVTYENGETFFWWLLVVPLGKIIDDGSDADTDSDSEHPTSAPSTTAPNYALPLSLTEKQRNRSYILYNESGVSYEFNQQTINEIAQYLLTFMSDAKK.

Low complexity predominate over residues 121–143 (TLSPSIVSEQQQQQQQQQQQQQQ). Disordered regions lie at residues 121–146 (TLSP…QAIS) and 371–392 (SDAD…TAPN). The span at 382–391 (PTSAPSTTAP) shows a compositional bias: polar residues.

This is an uncharacterized protein from Dictyostelium discoideum (Social amoeba).